A 309-amino-acid chain; its full sequence is Olfactory receptor 8U9 (309 aa).

Residues 1 to 28 (MTQINCTQVTEFILVGLTDRQELKMPLF) lie on the Extracellular side of the membrane. Residue asparagine 5 is glycosylated (N-linked (GlcNAc...) asparagine). The helical transmembrane segment at 29–49 (VLFLSIYLFTVVGNLGLILLI) threads the bilayer. At 50–56 (RTDEKLN) the chain is on the cytoplasmic side. The chain crosses the membrane as a helical span at residues 57–77 (TPMYFFLSNLAFVDFCYSSVI). The Extracellular segment spans residues 78–97 (TPKMLGNFLYKQNSISFNAC). Residues cysteine 97 and cysteine 179 are joined by a disulfide bond. A helical transmembrane segment spans residues 98–118 (AAQLGCFLAFMTAECLLLASM). The Cytoplasmic portion of the chain corresponds to 119–143 (AYDRYVAICNPLMYMVVMSPGICIQ). Residues 144–164 (LVAAPHSYSILVALFHTILTF) traverse the membrane as a helical segment. Topologically, residues 165–204 (RLSYCHSNIVNHFYCDDMPLLRLTCSDTRFKQLWIFACAG) are extracellular. The helical transmembrane segment at 205-225 (IMFISSLLIVFVSYMFIISAI) threads the bilayer. The Cytoplasmic portion of the chain corresponds to 226-239 (LRMHSAEGRQKAFS). A helical membrane pass occupies residues 240-260 (TCGSHMLAVTIFYGTLIFMYL). Topologically, residues 261 to 272 (QPSSSHALDTDK) are extracellular. The helical transmembrane segment at 273–293 (MASVFYTVIIPMLNPLIYSLQ) threads the bilayer. The Cytoplasmic segment spans residues 294 to 309 (NKEVKEALKKIIINKN).

This sequence belongs to the G-protein coupled receptor 1 family.

It is found in the cell membrane. Functionally, odorant receptor. The chain is Olfactory receptor 8U9 (OR8U9) from Homo sapiens (Human).